The sequence spans 396 residues: MTGFFTILSFSLAALSVTNAAQILSVPKGAEVVPNGYIVVMKDDTSQQDFSSHRVWISSIHHNMTRRGLDGAGVKQTYDFDHLRGYSGIFDEDTIKDISNDPKVAFVEPDAIISQHVVVQQRKAPWGLSRLSNRRGGRNYVFDSSAGSGVWAYVVDSGVDVRHSEFQGRAVWGSNLVDNKNSDGTGHGTHVAGTIAGKTYGIAKNAKVVAVKVLNSEGKGPTSGIIAGINWSIRHARKHGMLQKSVLNMSLGGTYSAGLNHATAQAIKAGMFVSVSAGNDNINSNGNSPASERSVCTIAASTENDGKASFSNWGPAVDLYAPGHNILSARPGGGSQTMSGTSMAAPHAAGVAAYLIAKEGIPGNRACLRLKQLSQPTIRNPGPDTTSRLLYNGSGR.

The signal sequence occupies residues Met-1 to Ala-20. A propeptide spanning residues Ala-21 to His-116 is cleaved from the precursor. The 77-residue stretch at Tyr-37–Ile-113 folds into the Inhibitor I9 domain. Residues Pro-125–Arg-396 form the Peptidase S8 domain. Active-site charge relay system residues include Asp-156 and His-187. 2 N-linked (GlcNAc...) asparagine glycosylation sites follow: Asn-230 and Asn-248. The active-site Charge relay system is Ser-342. The segment covering Pro-376–Leu-389 has biased composition (polar residues). Residues Pro-376 to Arg-396 are disordered. Asn-392 carries N-linked (GlcNAc...) asparagine glycosylation.

Belongs to the peptidase S8 family.

Its subcellular location is the secreted. Functionally, secreted subtilisin-like serine protease with keratinolytic activity that contributes to pathogenicity. The chain is Subtilisin-like protease 5 (SUB5) from Arthroderma benhamiae (strain ATCC MYA-4681 / CBS 112371) (Trichophyton mentagrophytes).